The sequence spans 472 residues: Probable glycine dehydrogenase (decarboxylating) subunit 2 (472 aa).

Lys-268 bears the N6-(pyridoxal phosphate)lysine mark.

Belongs to the GcvP family. C-terminal subunit subfamily. As to quaternary structure, the glycine cleavage system is composed of four proteins: P, T, L and H. In this organism, the P 'protein' is a heterodimer of two subunits. The cofactor is pyridoxal 5'-phosphate.

It catalyses the reaction N(6)-[(R)-lipoyl]-L-lysyl-[glycine-cleavage complex H protein] + glycine + H(+) = N(6)-[(R)-S(8)-aminomethyldihydrolipoyl]-L-lysyl-[glycine-cleavage complex H protein] + CO2. Functionally, the glycine cleavage system catalyzes the degradation of glycine. The P protein binds the alpha-amino group of glycine through its pyridoxal phosphate cofactor; CO(2) is released and the remaining methylamine moiety is then transferred to the lipoamide cofactor of the H protein. This Thermoplasma volcanium (strain ATCC 51530 / DSM 4299 / JCM 9571 / NBRC 15438 / GSS1) protein is Probable glycine dehydrogenase (decarboxylating) subunit 2.